The sequence spans 505 residues: Cytochrome P450 monooxygenase FGM1 (505 aa).

Positions 1-23 (MPLILSITSSGTVLVLLTLLSLA) are cleaved as a signal peptide. 2 N-linked (GlcNAc...) asparagine glycosylation sites follow: Asn188 and Asn351. Cys450 is a binding site for heme.

Belongs to the cytochrome P450 family. Heme is required as a cofactor.

Its pathway is secondary metabolite biosynthesis. In terms of biological role, cytochrome P450 monooxygenase; part of the Fg3_54/C64 gene cluster that mediates the biosynthesis of the octapeptide fusaoctaxin A, a virulence factor that is required for cell-to-cell invasiveness of plant host. The 2 nonribosomal peptide synthetases NRPS9 and NRPS5 form an assembly line which likely utilizes GABA as a starter unit (loaded on the unique module M1 of NRPS9) and sequentially incorporates seven extender units composed of the residues L-Ala, L-allo-Ile, L-Ser, L-Val, L-Ser, L-Leu and L-Leu, respectively. During the process, each of the residues that are tethered on modules M3-M7 of NRPS5 containing an E domain can undergo an epimerization reaction to produce a D-configuration before the transpeptidation reaction occurs. The elongation of the peptidyl chain might be terminated by module M8-mediated L-Leu incorporation, followed by R domain-catalyzed 4 electron reduction to release the resulting octapeptide from the assembly line as an alcohol. Fusaoctaxin A is cleaved by the cluster specific ABC transporter FGM5 to the pentapeptide fusapentaxin A and the tripeptide fusatrixin A. The other enzymes from the cluster, FGM1, FGM2, FGM3 and FGM9 seem not to be involved in the biosynthesis of fusaoctaxin A and their functions have still to be determined. This Gibberella zeae (strain ATCC MYA-4620 / CBS 123657 / FGSC 9075 / NRRL 31084 / PH-1) (Wheat head blight fungus) protein is Cytochrome P450 monooxygenase FGM1.